The primary structure comprises 1022 residues: MAFTNYSTLNRAQLTFDYLHTNSTTHAFLFGALAELIDNARDADATRIDIYAEKREDLQGGFMLCFLDNGVGMDPNDVINVIQFGKSAKRTPESTQIGRYGNGLKSGSMRIGKDFILFTKKENTMSCLFLSRTFHEEEGIDEVIVPLPTWNSQTREPVTDNMEKFAIETELIYKYSPFHTEEEVMTQFTKISGTSGTLVVIFNLKLTDNGEPELDVTSNPKDIRMAEISQEGVKPERHSFCAYAAVLYIDPRMRIFIHGHKVQTKKLCCCLYKPRKYTFTSHRFKTRAEQEVKKADQVAQLAEEKAREAESKARTLEIHMGGDITRDSRVMLRQVQNTAITLRREADVKKRIRDAKQQALKEPKELTFVFGVNIEHRDHDGMFIYNCSRLIKMYEKVGPQLEKGMVCGGVVGVIDVPYLVLEPTHNKQDFADAKEYRHLLRAMGEHLAQYWKDIEIAQHGIIKFWDEFGYLSANWNRPPSDELHFKRKRAMQVPTTIQCDLCLKWRTLPFQLSAVEEGYPINWVCSMNPDPEQDQCEAFELKQKIPLGILKKAPKTQEERQKQLTEKIQQEQRKLKALKKIKPIHSQSDLKKLPLEVTSRPFSKYPAHIFQGPQSSFHVVKTNARRRPQSRHAPFRQLQRSSIICTNPKPPFLVDKTEAVLLQPPETPQKSVSLLVKTIPQPPPLVQSLSPSVVPKSNNPWKVETPQIMNTPVAEMPYVPVNPSLVICDHKRSPEVSDEIEDEDRRKRMCKRGRFTVKKEKIQASELSDSSGEENPVDLKTAQKDKGLYVEVRMMGECYKGHVTAVEVGDNVVWWKVKFEDMPKDSTPRDCWVEKGSENVWLVKPSPEYQSTDEQQEDRKGEEDTVVQQALALQQTSTSECFCTEPDTTASTANHKTIDLLVQILWNCLHYFMPLSFPISKKELGAMNSEELLSLPLKECFKQYEVGLQNLCRSYQRCADSQAKVSEESLRISQKKLQETEEKLQKLRTNIQTLLQMAQQGINIRADDELDAYIEDLVSSDD.

Position 2 is an N-acetylalanine (alanine 2). ATP-binding positions include asparagine 39, 87–89 (SAK), and 99–105 (RYGNGLK). Mg(2+) is bound at residue asparagine 39. The stretch at 285 to 362 (KTRAEQEVKK…RDAKQQALKE (78 aa)) forms a coiled coil. An ATP-binding site is contributed by lysine 427. The segment at 490–544 (AMQVPTTIQCDLCLKWRTLPFQLSAVEEGYPINWVCSMNPDPEQDQCEAFELKQK) adopts a CW-type zinc-finger fold. Zn(2+) is bound by residues cysteine 499, cysteine 502, cysteine 525, and cysteine 536. The stretch at 555–583 (KTQEERQKQLTEKIQQEQRKLKALKKIKP) forms a coiled coil. Position 615 is a phosphoserine (serine 615). Lysine 649 is covalently cross-linked (Glycyl lysine isopeptide (Lys-Gly) (interchain with G-Cter in SUMO2)). Phosphoserine occurs at positions 690, 724, 733, and 737. Lysine 758 participates in a covalent cross-link: Glycyl lysine isopeptide (Lys-Gly) (interchain with G-Cter in SUMO2). Phosphoserine is present on residues serine 768 and serine 770. Threonine 827 is subject to Phosphothreonine. Phosphoserine occurs at positions 846 and 851. Lysine 922 is covalently cross-linked (Glycyl lysine isopeptide (Lys-Gly) (interchain with G-Cter in SUMO2)). The stretch at 962–1001 (QAKVSEESLRISQKKLQETEEKLQKLRTNIQTLLQMAQQG) forms a coiled coil.

In terms of assembly, interacts with Morc2a. In terms of tissue distribution, protein is abundant in testes but not detected in other adult tissues examined (at protein level). Detected in germ cells with a distinct developmental-specific expression pattern but not in somatic cells such as Sertoli cells.

It is found in the nucleus. It carries out the reaction ATP + H2O = ADP + phosphate + H(+). Its function is as follows. Required for chromosomal synapsis and meiotic recombination in males and females. In Mus musculus (Mouse), this protein is ATPase MORC2B.